Here is a 130-residue protein sequence, read N- to C-terminus: S-adenosylmethionine decarboxylase proenzyme (130 aa).

Serine 64 functions as the Schiff-base intermediate with substrate; via pyruvic acid in the catalytic mechanism. Serine 64 is subject to Pyruvic acid (Ser); by autocatalysis. Catalysis depends on histidine 69, which acts as the Proton acceptor; for processing activity. Residue cysteine 84 is the Proton donor; for catalytic activity of the active site.

Belongs to the prokaryotic AdoMetDC family. Type 1 subfamily. Heterotetramer of two alpha and two beta chains arranged as a dimer of alpha/beta heterodimers. The cofactor is pyruvate. In terms of processing, is synthesized initially as an inactive proenzyme. Formation of the active enzyme involves a self-maturation process in which the active site pyruvoyl group is generated from an internal serine residue via an autocatalytic post-translational modification. Two non-identical subunits are generated from the proenzyme in this reaction, and the pyruvate is formed at the N-terminus of the alpha chain, which is derived from the carboxyl end of the proenzyme. The post-translation cleavage follows an unusual pathway, termed non-hydrolytic serinolysis, in which the side chain hydroxyl group of the serine supplies its oxygen atom to form the C-terminus of the beta chain, while the remainder of the serine residue undergoes an oxidative deamination to produce ammonia and the pyruvoyl group blocking the N-terminus of the alpha chain.

It carries out the reaction S-adenosyl-L-methionine + H(+) = S-adenosyl 3-(methylsulfanyl)propylamine + CO2. Its pathway is amine and polyamine biosynthesis; S-adenosylmethioninamine biosynthesis; S-adenosylmethioninamine from S-adenosyl-L-methionine: step 1/1. Catalyzes the decarboxylation of S-adenosylmethionine to S-adenosylmethioninamine (dcAdoMet), the propylamine donor required for the synthesis of the polyamines spermine and spermidine from the diamine putrescine. The polypeptide is S-adenosylmethionine decarboxylase proenzyme (Picrophilus torridus (strain ATCC 700027 / DSM 9790 / JCM 10055 / NBRC 100828 / KAW 2/3)).